The chain runs to 240 residues: Large ribosomal subunit protein uL3 (240 aa).

Disordered regions lie at residues 139-164 (VSHR…KMPG) and 215-240 (DAPK…QEGV). Q151 bears the N5-methylglutamine mark. The segment covering 225–240 (ADGGEQAAPAAEQEGV) has biased composition (low complexity).

It belongs to the universal ribosomal protein uL3 family. As to quaternary structure, part of the 50S ribosomal subunit. Forms a cluster with proteins L14 and L19. Methylated by PrmB.

Functionally, one of the primary rRNA binding proteins, it binds directly near the 3'-end of the 23S rRNA, where it nucleates assembly of the 50S subunit. The chain is Large ribosomal subunit protein uL3 from Rhodopseudomonas palustris (strain BisA53).